We begin with the raw amino-acid sequence, 116 residues long: Large ribosomal subunit protein bL17 (116 aa).

The protein belongs to the bacterial ribosomal protein bL17 family. Part of the 50S ribosomal subunit. Contacts protein L32.

The sequence is that of Large ribosomal subunit protein bL17 from Picosynechococcus sp. (strain ATCC 27264 / PCC 7002 / PR-6) (Agmenellum quadruplicatum).